Here is a 210-residue protein sequence, read N- to C-terminus: Ribosomal RNA small subunit methyltransferase G (210 aa).

Residues leucine 78, 124-125 (IE), and arginine 138 each bind S-adenosyl-L-methionine.

Belongs to the methyltransferase superfamily. RNA methyltransferase RsmG family.

It localises to the cytoplasm. The enzyme catalyses guanosine(527) in 16S rRNA + S-adenosyl-L-methionine = N(7)-methylguanosine(527) in 16S rRNA + S-adenosyl-L-homocysteine. Its function is as follows. Specifically methylates the N7 position of guanine in position 527 of 16S rRNA. The protein is Ribosomal RNA small subunit methyltransferase G of Bordetella bronchiseptica (strain ATCC BAA-588 / NCTC 13252 / RB50) (Alcaligenes bronchisepticus).